The chain runs to 103 residues: Large ribosomal subunit protein eL43 (103 aa).

This sequence belongs to the eukaryotic ribosomal protein eL43 family.

The polypeptide is Large ribosomal subunit protein eL43 (RPL37A) (Tetrahymena thermophila (strain SB210)).